We begin with the raw amino-acid sequence, 122 residues long: Large ribosomal subunit protein uL14 (122 aa).

This sequence belongs to the universal ribosomal protein uL14 family. Part of the 50S ribosomal subunit. Forms a cluster with proteins L3 and L19. In the 70S ribosome, L14 and L19 interact and together make contacts with the 16S rRNA in bridges B5 and B8.

Functionally, binds to 23S rRNA. Forms part of two intersubunit bridges in the 70S ribosome. The protein is Large ribosomal subunit protein uL14 of Beutenbergia cavernae (strain ATCC BAA-8 / DSM 12333 / CCUG 43141 / JCM 11478 / NBRC 16432 / NCIMB 13614 / HKI 0122).